Here is a 512-residue protein sequence, read N- to C-terminus: 2-isopropylmalate synthase (512 aa).

The Pyruvate carboxyltransferase domain occupies 5–268 (LIIFDTTLRD…ELGIDTQHIV (264 aa)). Mn(2+) contacts are provided by Asp-14, His-202, His-204, and Asn-239. A regulatory domain region spans residues 394-512 (GFVSLSQRSE…SKAERVAAQG (119 aa)).

This sequence belongs to the alpha-IPM synthase/homocitrate synthase family. LeuA type 1 subfamily. Homodimer. It depends on Mn(2+) as a cofactor.

The protein resides in the cytoplasm. The enzyme catalyses 3-methyl-2-oxobutanoate + acetyl-CoA + H2O = (2S)-2-isopropylmalate + CoA + H(+). It participates in amino-acid biosynthesis; L-leucine biosynthesis; L-leucine from 3-methyl-2-oxobutanoate: step 1/4. Its function is as follows. Catalyzes the condensation of the acetyl group of acetyl-CoA with 3-methyl-2-oxobutanoate (2-ketoisovalerate) to form 3-carboxy-3-hydroxy-4-methylpentanoate (2-isopropylmalate). This chain is 2-isopropylmalate synthase, found in Paracidovorax citrulli (strain AAC00-1) (Acidovorax citrulli).